A 550-amino-acid polypeptide reads, in one-letter code: Glucose-6-phosphate isomerase (550 aa).

The active-site Proton donor is glutamate 356. Active-site residues include histidine 387 and lysine 515.

The protein belongs to the GPI family.

It is found in the cytoplasm. The catalysed reaction is alpha-D-glucose 6-phosphate = beta-D-fructose 6-phosphate. It functions in the pathway carbohydrate biosynthesis; gluconeogenesis. The protein operates within carbohydrate degradation; glycolysis; D-glyceraldehyde 3-phosphate and glycerone phosphate from D-glucose: step 2/4. In terms of biological role, catalyzes the reversible isomerization of glucose-6-phosphate to fructose-6-phosphate. This is Glucose-6-phosphate isomerase from Vibrio parahaemolyticus serotype O3:K6 (strain RIMD 2210633).